A 375-amino-acid polypeptide reads, in one-letter code: ATVGKTIRCRAAVAWEAGKPLSMEEVEVAPPQAGEVRIKIVATGICHTDAYTLSGSDPEGVFPSVLGHEGAGIVESVGEGVTKFKSGDAVIPLYVPQCGECKFCKNPKTNLCQKIRLTQGKGLMPNGTSRFSCNGQVLFHFMGSSTFSEYTVVAEISLAKVHEKAPLDKVCLLGCAISTGYGAALNTAKVEAGSTCAVFGLGALGLAVIMGCQAAGASRIIAIDVNPDKFRIAKEFGATDLVNPKDHSKPVEQVLVEMTDGGVDYSFECVGNIAVMRAALEACHKGWGTSVIIGVAAAGQEISTRPFQLVTGRTWKGTAFGGYKSVESVPKLVEEYMNKKVKVDEFVTHTLPFEKIHEGFDLMGAGKSIRTVLNY.

Ala1 carries the N-acetylalanine modification. The Zn(2+) site is built by Cys46, His68, Cys98, Cys101, Cys104, Cys112, and Cys175.

Belongs to the zinc-containing alcohol dehydrogenase family. Class-III subfamily. In terms of assembly, homodimer or heterodimer with H chain. Zn(2+) serves as cofactor.

Its subcellular location is the cytoplasm. It carries out the reaction a primary alcohol + NAD(+) = an aldehyde + NADH + H(+). It catalyses the reaction a secondary alcohol + NAD(+) = a ketone + NADH + H(+). The catalysed reaction is S-(hydroxymethyl)glutathione + NADP(+) = S-formylglutathione + NADPH + H(+). The enzyme catalyses S-(hydroxymethyl)glutathione + NAD(+) = S-formylglutathione + NADH + H(+). Functionally, class-III ADH is remarkably ineffective in oxidizing ethanol, but it readily catalyzes the oxidation of long-chain primary alcohols and the oxidation of S-(hydroxymethyl) glutathione. The polypeptide is Alcohol dehydrogenase class-3 chain L (Gadus morhua (Atlantic cod)).